Reading from the N-terminus, the 124-residue chain is MSIETLVEEIGKLTLTEASELVKALEEKFGVSAAPVAVAGVAAAAAGDAPVVEEQTEFDVVLTAAGESKINVIKAVRAITGLGLKEAKDLVDGAPKTVKEAISKDEAEKIAKELKDAGASVEVK.

This sequence belongs to the bacterial ribosomal protein bL12 family. As to quaternary structure, homodimer. Part of the ribosomal stalk of the 50S ribosomal subunit. Forms a multimeric L10(L12)X complex, where L10 forms an elongated spine to which 2 to 4 L12 dimers bind in a sequential fashion. Binds GTP-bound translation factors.

In terms of biological role, forms part of the ribosomal stalk which helps the ribosome interact with GTP-bound translation factors. Is thus essential for accurate translation. This Pelodictyon phaeoclathratiforme (strain DSM 5477 / BU-1) protein is Large ribosomal subunit protein bL12.